The following is a 364-amino-acid chain: MEHNTDTVYNFSAGPAALPKAVMLQAQAEFVNWNHLGTSVMEISHRSQPFIQVAEHAERDLRDLLNIPDNYKVLFCQGGARAQFAAVPLNLLGDAETATYIDAGYWAMSAVKEAKKYCTVDVFDAKIEKEGKIAVLPASEWRIANNAAYVHFCPNETIDGIEINDLPVTDKPIVADMSSTILSREIDVSKYGVIYAGAQKNIGPAGICIAIVRDDLLDLASDLLPGVLNYKILAEQESMFNTPPTFAWYLSGLVFQWLKAQGGVKAIEEVNRAKAALLYGYIDSSDFYRNEIHPDNRSLMNVPFQLAKPELDDTFLELAEARGLVSLKGHRVVGGMRASIYNAMPLEGVQALVDFMKEFEAQYA.

An L-glutamate-binding site is contributed by arginine 46. Pyridoxal 5'-phosphate-binding positions include 80-81 (AR), tryptophan 106, threonine 157, aspartate 176, and glutamine 199. Lysine 200 bears the N6-(pyridoxal phosphate)lysine mark. 241-242 (NT) serves as a coordination point for pyridoxal 5'-phosphate.

It belongs to the class-V pyridoxal-phosphate-dependent aminotransferase family. SerC subfamily. As to quaternary structure, homodimer. Pyridoxal 5'-phosphate is required as a cofactor.

The protein resides in the cytoplasm. It catalyses the reaction O-phospho-L-serine + 2-oxoglutarate = 3-phosphooxypyruvate + L-glutamate. The catalysed reaction is 4-(phosphooxy)-L-threonine + 2-oxoglutarate = (R)-3-hydroxy-2-oxo-4-phosphooxybutanoate + L-glutamate. It participates in amino-acid biosynthesis; L-serine biosynthesis; L-serine from 3-phospho-D-glycerate: step 2/3. The protein operates within cofactor biosynthesis; pyridoxine 5'-phosphate biosynthesis; pyridoxine 5'-phosphate from D-erythrose 4-phosphate: step 3/5. In terms of biological role, catalyzes the reversible conversion of 3-phosphohydroxypyruvate to phosphoserine and of 3-hydroxy-2-oxo-4-phosphonooxybutanoate to phosphohydroxythreonine. The polypeptide is Phosphoserine aminotransferase (Vibrio cholerae serotype O1 (strain ATCC 39315 / El Tor Inaba N16961)).